A 248-amino-acid chain; its full sequence is Adenosylcobinamide-GDP ribazoletransferase (248 aa).

6 helical membrane-spanning segments follow: residues 36-56 (FFLP…YLGL), 59-79 (FLPP…ITGG), 113-133 (FGTI…YSLV), 137-157 (CSIA…FLCL), 170-190 (IFIG…ALAM), and 199-219 (ITII…LLCL).

Belongs to the CobS family. The cofactor is Mg(2+).

It localises to the cell membrane. It catalyses the reaction alpha-ribazole + adenosylcob(III)inamide-GDP = adenosylcob(III)alamin + GMP + H(+). It carries out the reaction alpha-ribazole 5'-phosphate + adenosylcob(III)inamide-GDP = adenosylcob(III)alamin 5'-phosphate + GMP + H(+). It functions in the pathway cofactor biosynthesis; adenosylcobalamin biosynthesis; adenosylcobalamin from cob(II)yrinate a,c-diamide: step 7/7. In terms of biological role, joins adenosylcobinamide-GDP and alpha-ribazole to generate adenosylcobalamin (Ado-cobalamin). Also synthesizes adenosylcobalamin 5'-phosphate from adenosylcobinamide-GDP and alpha-ribazole 5'-phosphate. In Clostridium botulinum (strain 657 / Type Ba4), this protein is Adenosylcobinamide-GDP ribazoletransferase.